A 3259-amino-acid chain; its full sequence is Striated muscle-specific serine/threonine-protein kinase (3259 aa).

The tract at residues 1-30 (MQKARGTRGEDAGTRAPPSPGVPPKRAKVG) is disordered. Arginine 33 is subject to Omega-N-methylarginine. Positions 45–126 (PVFLRPLKNA…GKASCEAVLT (82 aa)) constitute an Ig-like 1 domain. The residue at position 141 (serine 141) is a Phosphoserine. 4 disordered regions span residues 155–185 (RAFS…TSEE), 198–226 (EQEA…GPRH), 278–716 (PSGL…DDSY), and 816–880 (VRPG…KVSL). A compositionally biased stretch (polar residues) spans 158–185 (STPTGGSDTLVGTSLDTPPTSVTGTSEE). Positions 301–317 (PALPPPSKSALLPPPSP) are enriched in pro residues. Phosphoserine is present on residues serine 368 and serine 375. Threonine 379 carries the phosphothreonine modification. Serine 382 and serine 385 each carry phosphoserine. Residues 404 to 422 (ILDKLQFFEERRRSLERSD) show a composition bias toward basic and acidic residues. Position 423 is a phosphoserine (serine 423). At threonine 453 the chain carries Phosphothreonine. Serine 457, serine 463, serine 493, serine 511, serine 531, and serine 554 each carry phosphoserine. Residues 459-473 (EELRSPRGSVAERRR) show a composition bias toward basic and acidic residues. The span at 510–522 (TSREELVRSHESL) shows a compositional bias: basic and acidic residues. 2 stretches are compositionally biased toward basic and acidic residues: residues 624 to 638 (PESR…KREP) and 663 to 680 (EKNR…RGPE). An Ig-like 2 domain is found at 727–817 (PVFEIPLQNM…ASCASSLAVR (91 aa)). The segment covering 820-830 (ASTSPFSSPIT) has biased composition (polar residues). Ig-like domains are found at residues 874–963 (PTFK…ARLE), 968–1056 (PESR…DELT), and 1069–1157 (PLFT…AQLY). Cysteine 994 and cysteine 1046 are disulfide-bonded. Phosphoserine occurs at positions 1133 and 1177. The interval 1162–1185 (RTAASGPSSKLEKMPSIPEEPEHG) is disordered. An Ig-like 6 domain is found at 1193–1283 (PDFLRPLQDL…AACYAHLYVT (91 aa)). The 98-residue stretch at 1290 to 1387 (PDGAPQVVAV…PSEPVQLLEH (98 aa)) folds into the Fibronectin type-III 1 domain. Residues 1367–1379 (SSGKSSSKPSAPS) are compositionally biased toward low complexity. The segment at 1367-1386 (SSGKSSSKPSAPSEPVQLLE) is disordered. Positions 1490 to 1578 (PRFESIMEDV…GEVSCKAELS (89 aa)) constitute an Ig-like 7 domain. The region spanning 1606–1859 (YDIHQEIGRG…AEETLEHPWF (254 aa)) is the Protein kinase 1 domain. ATP contacts are provided by residues 1612–1620 (IGRGAFSYL) and lysine 1635. Residue aspartate 1724 is the Proton acceptor of the active site. Disordered stretches follow at residues 1913-2244 (MPRR…QMPA), 2336-2451 (AKFK…SPVL), and 2463-2562 (RLSS…SQPN). Low complexity predominate over residues 1918–1927 (PPSGGLSSSS). Phosphoserine occurs at positions 1993, 2004, 2019, 2020, and 2042. The span at 2009–2019 (SPRRPELRRGS) shows a compositional bias: basic and acidic residues. Asymmetric dimethylarginine; alternate is present on arginine 2060. An Omega-N-methylarginine; alternate modification is found at arginine 2060. Over residues 2069–2081 (AQRLQALRQRLLR) the composition is skewed to low complexity. Serine 2114 and serine 2135 each carry phosphoserine. An Omega-N-methylarginine modification is found at arginine 2144. A compositionally biased stretch (polar residues) spans 2168 to 2179 (ESPSLSALSETQ). Residues 2180-2189 (PPSPALPSAP) show a composition bias toward pro residues. Phosphoserine occurs at positions 2182 and 2207. Residues 2193–2207 (ITKSPEPSAATSRDS) show a composition bias toward polar residues. Residues 2208 to 2218 (PQPPAPQPVPE) show a composition bias toward pro residues. The segment covering 2219–2229 (KIPEPKPEPVR) has biased composition (basic and acidic residues). The span at 2230-2244 (AAKPAQPPLALQMPA) shows a compositional bias: low complexity. Over residues 2336–2345 (AKFKRSRESP) the composition is skewed to basic and acidic residues. Positions 2346-2355 (LSRGLRLLSR) are enriched in low complexity. Residues 2356-2372 (SRSEERGPFRGAEDDGI) show a composition bias toward basic and acidic residues. The residue at position 2376 (serine 2376) is a Phosphoserine. The residue at position 2380 (threonine 2380) is a Phosphothreonine. A compositionally biased stretch (basic and acidic residues) spans 2384–2395 (LVRRPERSRSVQ). Phosphoserine is present on residues serine 2410, serine 2414, serine 2438, serine 2439, serine 2444, and serine 2448. Low complexity predominate over residues 2463–2484 (RLSSRLQRSGSSEDSGGASGRS). Over residues 2510–2520 (QLASQTGATTP) the composition is skewed to polar residues. 2 positions are modified to phosphoserine: serine 2521 and serine 2524. Over residues 2521–2540 (SAESLGSEASGTSGSSAPGE) the composition is skewed to low complexity. Basic residues predominate over residues 2543–2554 (SRHRWGLSRLRK). Residue serine 2559 is modified to Phosphoserine. Residues 2583 to 2673 (PPVFHIKLKD…GSITSSCTVA (91 aa)) form the Ig-like 8 domain. A disulfide bond links cysteine 2605 and cysteine 2657. Residues 2680-2774 (KLAPPEVPQT…KVFIRGTQDS (95 aa)) form the Fibronectin type-III 2 domain. Threonine 2771 carries the post-translational modification Phosphothreonine. 2 disordered regions span residues 2771-2829 (TQDS…MSAN) and 2855-2957 (TQQA…PQKP). A Phosphoserine modification is found at serine 2774. Over residues 2793–2810 (RAPPPDSPTSLVPTPPLA) the composition is skewed to pro residues. Residues 2814 to 2828 (SQASTLSPSTSSMSA) are compositionally biased toward low complexity. The 107-residue stretch at 2859 to 2965 (EPSPPSILVT…KPYTFLEEKA (107 aa)) folds into the Fibronectin type-III 3 domain. The segment covering 2880-2907 (GTLTPTSSPQGVKPAPSSSSLYMVTSFV) has biased composition (polar residues). Pro residues predominate over residues 2910-2924 (PPDPQPPAPEPPPEP). Residues 2940–2950 (SSPTPESTTLR) show a composition bias toward polar residues. Serine 2941 bears the Phosphoserine mark. A Protein kinase 2 domain is found at 2958–3210 (YTFLEEKARG…LQDCLAHPWL (253 aa)). ATP contacts are provided by residues 2964–2972 (KARGRFGVV) and lysine 2987. Aspartate 3077 (proton acceptor) is an active-site residue.

This sequence belongs to the protein kinase superfamily. CAMK Ser/Thr protein kinase family. As to quaternary structure, interacts with MTM1. Post-translationally, may be autophosphorylated. Isoform 2 is highly expressed in differentiated arterial smooth muscle cells (ASMC) in the medial layer of the aorta. Weakly detected in brain and testis and to a lesser extent in organs rich in striated muscle or visceral smooth muscle.

The protein localises to the nucleus. It catalyses the reaction L-seryl-[protein] + ATP = O-phospho-L-seryl-[protein] + ADP + H(+). It carries out the reaction L-threonyl-[protein] + ATP = O-phospho-L-threonyl-[protein] + ADP + H(+). Its function is as follows. Isoform 2 may have a role in regulating the growth and differentiation of arterial smooth muscle cells. In Rattus norvegicus (Rat), this protein is Striated muscle-specific serine/threonine-protein kinase (Speg).